The following is a 377-amino-acid chain: Serine protease grass (377 aa).

The first 26 residues, 1 to 26 (MMIASSLAVLYGIAIVSSMGVQSARA), serve as a signal peptide directing secretion. The 59-residue stretch at 31-89 (DCTTPDGDQGQCMPFSSCRTIEERLTEAQKAGQKVPADYASYLQKALCGEFNGVRHFCC) folds into the Clip domain. Cystine bridges form between cysteine 32-cysteine 88, cysteine 42-cysteine 78, cysteine 48-cysteine 89, cysteine 111-cysteine 243, cysteine 148-cysteine 164, and cysteine 188-cysteine 197. A linker region spans residues 91 to 118 (SANIQHNSKVMSLFKDENFDCGNFLSQR). A Peptidase S1 domain is found at 119-373 (VSNGYEVKLS…YVQWITDTMA (255 aa)). Histidine 163 (charge relay system) is an active-site residue. Glutamate 179, arginine 181, threonine 184, and aspartate 187 together coordinate Ca(2+). Aspartate 223 functions as the Charge relay system in the catalytic mechanism. Asparagine 230 and asparagine 270 each carry an N-linked (GlcNAc...) asparagine glycan. Disulfide bonds link cysteine 290–cysteine 304 and cysteine 314–cysteine 349. Serine 318 serves as the catalytic Charge relay system.

Belongs to the peptidase S1 family. CLIP subfamily. Post-translationally, proteolytically cleaved by a tryspin-like protease which is likely to activate grass.

Its subcellular location is the secreted. Functionally, endopeptidase. Plays a key role in innate immunity by activating the Toll pathway in response to fungal and Gram-positive bacterial infections, presumably downstream of pattern-recognition receptors (PRR), such as PGRP-SA, GNBP1 and GNBP3, and upstream of spz processing enzyme SPE. This chain is Serine protease grass, found in Drosophila melanogaster (Fruit fly).